A 321-amino-acid chain; its full sequence is Glucokinase (321 aa).

Position 8–13 (8–13 (GDVGGT)) interacts with ATP.

The protein belongs to the bacterial glucokinase family.

It localises to the cytoplasm. It carries out the reaction D-glucose + ATP = D-glucose 6-phosphate + ADP + H(+). This chain is Glucokinase, found in Salmonella arizonae (strain ATCC BAA-731 / CDC346-86 / RSK2980).